Consider the following 600-residue polypeptide: Proline--tRNA ligase (600 aa).

It belongs to the class-II aminoacyl-tRNA synthetase family. ProS type 1 subfamily. In terms of assembly, homodimer.

The protein resides in the cytoplasm. The enzyme catalyses tRNA(Pro) + L-proline + ATP = L-prolyl-tRNA(Pro) + AMP + diphosphate. Catalyzes the attachment of proline to tRNA(Pro) in a two-step reaction: proline is first activated by ATP to form Pro-AMP and then transferred to the acceptor end of tRNA(Pro). As ProRS can inadvertently accommodate and process non-cognate amino acids such as alanine and cysteine, to avoid such errors it has two additional distinct editing activities against alanine. One activity is designated as 'pretransfer' editing and involves the tRNA(Pro)-independent hydrolysis of activated Ala-AMP. The other activity is designated 'posttransfer' editing and involves deacylation of mischarged Ala-tRNA(Pro). The misacylated Cys-tRNA(Pro) is not edited by ProRS. The polypeptide is Proline--tRNA ligase (Prochlorococcus marinus (strain MIT 9301)).